A 623-amino-acid polypeptide reads, in one-letter code: Heterogeneous nuclear ribonucleoprotein Q (623 aa).

Ala-2 carries the post-translational modification N-acetylalanine. Phosphoserine is present on Ser-159. RRM domains follow at residues Thr-162–Ala-241, Asn-243–Pro-325, and Lys-338–Pro-408. Residue Lys-168 forms a Glycyl lysine isopeptide (Lys-Gly) (interchain with G-Cter in SUMO2) linkage. Lys-221 carries the post-translational modification N6-acetyllysine. Lys-363 carries the N6-acetyllysine modification. At Tyr-373 the chain carries Phosphotyrosine. The segment at Asn-400–Val-561 is interaction with APOBEC1. At Arg-444 the chain carries Asymmetric dimethylarginine; by PRMT1; alternate. Arg-444 carries the post-translational modification Omega-N-methylarginine; by PRMT1; alternate. 6 repeat units span residues Arg-448–Gly-450, Arg-451–Gly-453, Tyr-460–Glu-464, Tyr-469–Tyr-472, Arg-478–Gly-480, and Tyr-485–Tyr-488. The 8 X 3 AA repeats of R-G-G stretch occupies residues Arg-448–Gly-559. The interval Tyr-460–Tyr-488 is 3 X 4 AA repeats of Y-Y-G-Y. Arg-496 carries the omega-N-methylarginine; by PRMT1 modification. The segment at Gly-497–Lys-623 is disordered. The 1-4 repeat unit spans residues Arg-498–Gly-500. The span at Arg-504–Gly-522 shows a compositional bias: low complexity. Arg-510 bears the Asymmetric dimethylarginine; by PRMT1 mark. At Arg-518 the chain carries Asymmetric dimethylarginine; by PRMT1; alternate. The residue at position 518 (Arg-518) is an Omega-N-methylarginine; by PRMT1; alternate. An interaction with SMN region spans residues Arg-518 to Gly-549. Arg-526 bears the Asymmetric dimethylarginine; alternate mark. The residue at position 526 (Arg-526) is an Omega-N-methylarginine; alternate. The stretch at Arg-526 to Gly-528 is one 1-5 repeat. An asymmetric dimethylarginine; by PRMT1; alternate mark is found at Arg-536 and Arg-539. Omega-N-methylarginine; by PRMT1; alternate is present on residues Arg-536 and Arg-539. 3 repeat units span residues Arg-539 to Gly-541, Arg-554 to Gly-556, and Arg-557 to Gly-559. Over residues Val-550–Gly-562 the composition is skewed to gly residues. The Bipartite nuclear localization signal signature appears at Lys-564–Arg-578. Polar residues predominate over residues Thr-580–Leu-595. A Phosphoserine modification is found at Ser-587. Lys-607 is covalently cross-linked (Glycyl lysine isopeptide (Lys-Gly) (interchain with G-Cter in SUMO2)). Polar residues predominate over residues Gln-611–Lys-623.

As to quaternary structure, identified in the spliceosome C complex. Component of the coding region determinant (CRD)-mediated complex, composed of DHX9, HNRNPU, IGF2BP1, SYNCRIP and YBX1. Identified in a mRNP complex, at least composed of DHX9, DDX3X, ELAVL1, HNRNPU, IGF2BP1, ILF3, PABPC1, PCBP2, PTBP2, STAU1, STAU2, SYNCRIP and YBX1. Identified in a mRNP granule complex, at least composed of ACTB, ACTN4, DHX9, ERG, HNRNPA1, HNRNPA2B1, HNRNPAB, HNRNPD, HNRNPL, HNRNPR, HNRNPU, HSPA1, HSPA8, IGF2BP1, ILF2, ILF3, NCBP1, NCL, PABPC1, PABPC4, PABPN1, RPLP0, RPS3, RPS3A, RPS4X, RPS8, RPS9, SYNCRIP, YBX1 and untranslated mRNAs. Interacts with GTPBP1. Isoform 1 is a component of the APOB mRNA editosome complex. Isoform 1 interacts with APOBEC1 and A1CF. Part of a complex associated with the FOS mCRD domain and consisting of PABPC1, PAIP1, CSDE1/UNR, HNRPD and SYNCRIP. Isoform 2 interacts with HNRPR. Interacts with POLR2A hyperphosphorylated C-terminal domain. Interacts with HABP4. Identified in a histone pre-mRNA complex, at least composed of ERI1, LSM11, SLBP, SNRPB, SYNCRIP and YBX1. Isoform 1 and isoform 2 interact with SMN. Isoform 2 interacts through its C-terminal domain with SYT7, SYT8 and SYT9. The non-phosphorylated and phosphorylated forms are colocalized with PAIP1 in polysomes. Phosphorylated on tyrosine. The membrane-bound form found in microsomes is phosphorylated in vitro by insulin receptor tyrosine kinase (INSR). Phosphorylation is inhibited upon binding to RNA, whereas the cytoplasmic form is poorly phosphorylated. In terms of tissue distribution, ubiquitous. Detected in heart, brain, spleen, lung, liver, skeletal muscle, adipocytes, kidney and testis.

It is found in the nucleus. The protein resides in the nucleoplasm. It localises to the microsome. Its subcellular location is the cytoplasm. Functionally, heterogeneous nuclear ribonucleoprotein (hnRNP) implicated in mRNA processing mechanisms. Component of the CRD-mediated complex that promotes MYC mRNA stability. Isoform 1 and isoform 2 are associated in vitro with pre-mRNA, splicing intermediates and mature mRNA protein complexes. Isoform 1 binds to apoB mRNA AU-rich sequences. Isoform 1 is part of the APOB mRNA editosome complex and may modulate the postranscriptional C to U RNA-editing of the APOB mRNA through either by binding to A1CF (APOBEC1 complementation factor), to APOBEC1 or to RNA itself. May be involved in translationally coupled mRNA turnover. Implicated with other RNA-binding proteins in the cytoplasmic deadenylation/translational and decay interplay of the FOS mRNA mediated by the major coding-region determinant of instability (mCRD) domain. Interacts in vitro preferentially with poly(A) and poly(U) RNA sequences. Isoform 2 may be involved in cytoplasmic vesicle-based mRNA transport through interaction with synaptotagmins. The protein is Heterogeneous nuclear ribonucleoprotein Q (Syncrip) of Mus musculus (Mouse).